A 251-amino-acid polypeptide reads, in one-letter code: Imidazole glycerol phosphate synthase subunit HisF (251 aa).

Residues Asp-11 and Asp-130 contribute to the active site.

The protein belongs to the HisA/HisF family. Heterodimer of HisH and HisF.

Its subcellular location is the cytoplasm. The catalysed reaction is 5-[(5-phospho-1-deoxy-D-ribulos-1-ylimino)methylamino]-1-(5-phospho-beta-D-ribosyl)imidazole-4-carboxamide + L-glutamine = D-erythro-1-(imidazol-4-yl)glycerol 3-phosphate + 5-amino-1-(5-phospho-beta-D-ribosyl)imidazole-4-carboxamide + L-glutamate + H(+). It functions in the pathway amino-acid biosynthesis; L-histidine biosynthesis; L-histidine from 5-phospho-alpha-D-ribose 1-diphosphate: step 5/9. In terms of biological role, IGPS catalyzes the conversion of PRFAR and glutamine to IGP, AICAR and glutamate. The HisF subunit catalyzes the cyclization activity that produces IGP and AICAR from PRFAR using the ammonia provided by the HisH subunit. The chain is Imidazole glycerol phosphate synthase subunit HisF from Flavobacterium psychrophilum (strain ATCC 49511 / DSM 21280 / CIP 103535 / JIP02/86).